We begin with the raw amino-acid sequence, 29 residues long: Cytochrome b6-f complex subunit 8 (29 aa).

A helical transmembrane segment spans residues 3 to 23; it reads ILALGWVSVLALFTWSIAMVV.

The protein belongs to the PetN family. The 4 large subunits of the cytochrome b6-f complex are cytochrome b6, subunit IV (17 kDa polypeptide, PetD), cytochrome f and the Rieske protein, while the 4 small subunits are PetG, PetL, PetM and PetN. The complex functions as a dimer.

The protein resides in the cellular thylakoid membrane. Component of the cytochrome b6-f complex, which mediates electron transfer between photosystem II (PSII) and photosystem I (PSI), cyclic electron flow around PSI, and state transitions. This is Cytochrome b6-f complex subunit 8 from Gloeothece citriformis (strain PCC 7424) (Cyanothece sp. (strain PCC 7424)).